A 115-amino-acid polypeptide reads, in one-letter code: Small ribosomal subunit protein bS6 (115 aa).

The protein belongs to the bacterial ribosomal protein bS6 family.

Its function is as follows. Binds together with bS18 to 16S ribosomal RNA. This Syntrophotalea carbinolica (strain DSM 2380 / NBRC 103641 / GraBd1) (Pelobacter carbinolicus) protein is Small ribosomal subunit protein bS6.